Here is a 260-residue protein sequence, read N- to C-terminus: Hydroxyethylthiazole kinase (260 aa).

Residues R126 and S172 each coordinate ATP. G199 serves as a coordination point for substrate.

Belongs to the Thz kinase family. The cofactor is Mg(2+).

It catalyses the reaction 5-(2-hydroxyethyl)-4-methylthiazole + ATP = 4-methyl-5-(2-phosphooxyethyl)-thiazole + ADP + H(+). It participates in cofactor biosynthesis; thiamine diphosphate biosynthesis; 4-methyl-5-(2-phosphoethyl)-thiazole from 5-(2-hydroxyethyl)-4-methylthiazole: step 1/1. In terms of biological role, catalyzes the phosphorylation of the hydroxyl group of 4-methyl-5-beta-hydroxyethylthiazole (THZ). The sequence is that of Hydroxyethylthiazole kinase from Burkholderia thailandensis (strain ATCC 700388 / DSM 13276 / CCUG 48851 / CIP 106301 / E264).